The following is a 428-amino-acid chain: 3-phosphoshikimate 1-carboxyvinyltransferase (428 aa).

3 residues coordinate 3-phosphoshikimate: K23, S24, and R28. K23 serves as a coordination point for phosphoenolpyruvate. Phosphoenolpyruvate-binding residues include G97 and R125. 3-phosphoshikimate-binding residues include S170, S171, Q172, S198, D314, N337, and K341. Q172 contacts phosphoenolpyruvate. Catalysis depends on D314, which acts as the Proton acceptor. Residues R345, R387, and K412 each contribute to the phosphoenolpyruvate site.

It belongs to the EPSP synthase family. As to quaternary structure, monomer.

It localises to the cytoplasm. The enzyme catalyses 3-phosphoshikimate + phosphoenolpyruvate = 5-O-(1-carboxyvinyl)-3-phosphoshikimate + phosphate. The protein operates within metabolic intermediate biosynthesis; chorismate biosynthesis; chorismate from D-erythrose 4-phosphate and phosphoenolpyruvate: step 6/7. Its function is as follows. Catalyzes the transfer of the enolpyruvyl moiety of phosphoenolpyruvate (PEP) to the 5-hydroxyl of shikimate-3-phosphate (S3P) to produce enolpyruvyl shikimate-3-phosphate and inorganic phosphate. In Cronobacter sakazakii (strain ATCC BAA-894) (Enterobacter sakazakii), this protein is 3-phosphoshikimate 1-carboxyvinyltransferase.